We begin with the raw amino-acid sequence, 590 residues long: V-type ATP synthase alpha chain (590 aa).

232 to 239 (GPFGSGKT) contacts ATP.

Belongs to the ATPase alpha/beta chains family.

The enzyme catalyses ATP + H2O + 4 H(+)(in) = ADP + phosphate + 5 H(+)(out). In terms of biological role, produces ATP from ADP in the presence of a proton gradient across the membrane. The V-type alpha chain is a catalytic subunit. This is V-type ATP synthase alpha chain from Thermoanaerobacter pseudethanolicus (strain ATCC 33223 / 39E) (Clostridium thermohydrosulfuricum).